Here is a 245-residue protein sequence, read N- to C-terminus: Alanyl-tRNA editing protein AlaX-M (245 aa).

Residues H107, H111, C210, and H214 each coordinate Zn(2+).

It belongs to the class-II aminoacyl-tRNA synthetase family. Editing domain AlaX-M subfamily. Zn(2+) serves as cofactor.

It is found in the cytoplasm. Functionally, functions in trans to edit the amino acid moiety from mischarged charged tRNA(Ala). The protein is Alanyl-tRNA editing protein AlaX-M (alaXM) of Methanosarcina acetivorans (strain ATCC 35395 / DSM 2834 / JCM 12185 / C2A).